We begin with the raw amino-acid sequence, 729 residues long: MLYKGDTLYLDWLEDGIAELVFDAPGSVNKLDTATVASLGEAIGVLEQQSDLKGLLLRSNKAAFIVGADITEFLSLFLVPEEQLSQWLHFANSVFNRLEDLPVPTIAAVNGYALGGGCECVLATDYRLATPDLRIGLPETKLGIMPGFGGSVRMPRMLGADSALEIIAAGKDVGADQALKIGLVDGVVKAEKLVEGAKAVLRQAINGDLDWKAKRQPKLEPLKLSKIEATMSFTIAKGMVAQTAGKHYPAPITAVKTIEAAARFGREEALNLENKSFVPLAHTNEARALVGIFLNDQYVKGKAKKLTKDVETPKQAAVLGAGIMGGGIAYQSAWKGVPVVMKDINDKSLTLGMTEAAKLLNKQLERGKIDGLKLAGVISTIHPTLDYAGFDRVDIVVEAVVENPKVKKAVLAETEQKVRQDTVLASNTSTIPISELANALERPENFCGMHFFNPVHRMPLVEIIRGEKSSDETIAKVVAWASKMGKTPIVVNDCPGFFVNRVLFPYFAGFSQLLRDGADFRKIDKVMEKQFGWPMGPAYLLDVVGIDTAHHAQAVMAAGFPQRMQKDYRDAIDALFDANRFGQKNGLGFWRYKEDSKGKPKKEEDAAVEDLLAEVSQPKRDFSEEEIIARMMIPMVNEVVRCLEEGIIATPAEADMALVYGLGFPPFHGGAFRWLDTLGSAKYLDMAQQYQHLGPLYEVPEGLRNKARHNEPYYPPVEPARPVGDLKTA.

Residues 1–189 (MLYKGDTLYL…KIGLVDGVVK (189 aa)) form an enoyl-CoA hydratase/isomerase region. A substrate-binding site is contributed by D296. The tract at residues 311–729 (ETPKQAAVLG…ARPVGDLKTA (419 aa)) is 3-hydroxyacyl-CoA dehydrogenase. NAD(+) is bound by residues M324, D343, 400–402 (VVE), K407, and S429. H450 serves as the catalytic For 3-hydroxyacyl-CoA dehydrogenase activity. N453 serves as a coordination point for NAD(+). Residues N500 and Y660 each contribute to the substrate site. The tract at residues 708–729 (RHNEPYYPPVEPARPVGDLKTA) is disordered.

In the N-terminal section; belongs to the enoyl-CoA hydratase/isomerase family. This sequence in the C-terminal section; belongs to the 3-hydroxyacyl-CoA dehydrogenase family. As to quaternary structure, heterotetramer of two alpha chains (FadB) and two beta chains (FadA).

It carries out the reaction a (3S)-3-hydroxyacyl-CoA + NAD(+) = a 3-oxoacyl-CoA + NADH + H(+). It catalyses the reaction a (3S)-3-hydroxyacyl-CoA = a (2E)-enoyl-CoA + H2O. The catalysed reaction is a 4-saturated-(3S)-3-hydroxyacyl-CoA = a (3E)-enoyl-CoA + H2O. The enzyme catalyses (3S)-3-hydroxybutanoyl-CoA = (3R)-3-hydroxybutanoyl-CoA. It carries out the reaction a (3Z)-enoyl-CoA = a 4-saturated (2E)-enoyl-CoA. It catalyses the reaction a (3E)-enoyl-CoA = a 4-saturated (2E)-enoyl-CoA. Its pathway is lipid metabolism; fatty acid beta-oxidation. Its function is as follows. Involved in the aerobic and anaerobic degradation of long-chain fatty acids via beta-oxidation cycle. Catalyzes the formation of 3-oxoacyl-CoA from enoyl-CoA via L-3-hydroxyacyl-CoA. It can also use D-3-hydroxyacyl-CoA and cis-3-enoyl-CoA as substrate. The sequence is that of Fatty acid oxidation complex subunit alpha from Escherichia coli (strain K12 / MC4100 / BW2952).